The following is a 209-amino-acid chain: Ion-translocating oxidoreductase complex subunit G (209 aa).

A helical transmembrane segment spans residues 9–29; the sequence is ATTLALFAASTTAVTAVVNML. Thr-175 carries the FMN phosphoryl threonine modification.

This sequence belongs to the RnfG family. As to quaternary structure, the complex is composed of six subunits: RnfA, RnfB, RnfC, RnfD, RnfE and RnfG. FMN serves as cofactor.

The protein localises to the cell inner membrane. Its function is as follows. Part of a membrane-bound complex that couples electron transfer with translocation of ions across the membrane. The sequence is that of Ion-translocating oxidoreductase complex subunit G from Pectobacterium atrosepticum (strain SCRI 1043 / ATCC BAA-672) (Erwinia carotovora subsp. atroseptica).